Reading from the N-terminus, the 303-residue chain is uncharacterized protein (303 aa).

The region spanning 183 to 281 (KDILFYLNNN…GCSPSDYRRQ (99 aa)) is the HTH araC/xylS-type domain. 2 consecutive DNA-binding regions (H-T-H motif) follow at residues 200–221 (EQLS…TKEY) and 248–271 (QAEI…LRHV).

This is an uncharacterized protein from Escherichia coli (strain K12).